Consider the following 47-residue polypeptide: Protein 0.5 (47 aa).

Positions 1 to 23 are cleaved as a signal peptide; sequence MYMLTIGLLTALGLAVGASFGKA. The chain crosses the membrane as a helical span at residues 24-43; sequence LGVAVGSYFTACIIIGIIKG.

The protein resides in the host membrane. The sequence is that of Protein 0.5 from Escherichia phage T7 (Bacteriophage T7).